Consider the following 358-residue polypeptide: MATH domain and coiled-coil domain-containing protein At3g58440 (358 aa).

In terms of domain architecture, MATH spans 8–131; that stretch reads QDKFTWVLEK…NDRLTIVAEV (124 aa). A coiled-coil region spans residues 250 to 309; sequence LRDAGFKVDWLEKKLDQLKEKKEEEMSGLARLHEIEERLQKLKLLFVDLESQLQKEKVEA.

The protein is MATH domain and coiled-coil domain-containing protein At3g58440 of Arabidopsis thaliana (Mouse-ear cress).